Consider the following 797-residue polypeptide: Protocadherin-3 (797 aa).

The signal sequence occupies residues 1–30; the sequence is METALAKIPQQRQVFFLTILSLLWKSSSEA. Topologically, residues 31-691 are extracellular; it reads IRYSMPEETE…DNYDVLTLYL (661 aa). Cadherin domains are found at residues 35-133, 138-242, 247-346, 351-450, and 455-560; these read MPEE…SPEF, MLLT…SPQF, YKVQ…APEL, LTVL…APAF, and YTMF…APFV. N-linked (GlcNAc...) asparagine glycosylation is found at Asn169, Asn276, and Asn417. N-linked (GlcNAc...) asparagine glycosylation occurs at Asn566. A Cadherin 6 domain is found at 567–670; sequence ASAPCTELLP…VVDGFSQPYL (104 aa). Residues 692–712 form a helical membrane-spanning segment; it reads VIALASVSSLFLLSVVLFVGV. Over 713–797 the chain is Cytoplasmic; that stretch reads RLCRRAREAS…AVVHNSVGFY (85 aa).

Expressed in brain.

It localises to the cell membrane. Functionally, potential calcium-dependent cell-adhesion protein. May be involved in the establishment and maintenance of specific neuronal connections in the brain. The polypeptide is Protocadherin-3 (Pcdh3) (Rattus norvegicus (Rat)).